A 328-amino-acid chain; its full sequence is Thiamine-monophosphate kinase (328 aa).

The Mg(2+) site is built by Asp30, Thr45, Thr46, and Asp47. His54 serves as a coordination point for substrate. Residues Asp75 and Asp122 each coordinate Mg(2+). ATP contacts are provided by residues 121 to 122 (GD) and Arg146. Asp211 is a Mg(2+) binding site. Residue Ser213 participates in ATP binding. Asp214 serves as a coordination point for Mg(2+). 2 residues coordinate substrate: Glu262 and Phe321.

Belongs to the thiamine-monophosphate kinase family.

It catalyses the reaction thiamine phosphate + ATP = thiamine diphosphate + ADP. It functions in the pathway cofactor biosynthesis; thiamine diphosphate biosynthesis; thiamine diphosphate from thiamine phosphate: step 1/1. In terms of biological role, catalyzes the ATP-dependent phosphorylation of thiamine-monophosphate (TMP) to form thiamine-pyrophosphate (TPP), the active form of vitamin B1. This Haemophilus influenzae (strain ATCC 51907 / DSM 11121 / KW20 / Rd) protein is Thiamine-monophosphate kinase.